Here is a 79-residue protein sequence, read N- to C-terminus: uncharacterized protein (79 aa).

This is an uncharacterized protein from Caenorhabditis elegans.